The chain runs to 142 residues: Protein Turandot X (142 aa).

An N-terminal signal peptide occupies residues 1 to 22 (MGLSIGSLLICVFLGIVPFATA).

The protein belongs to the Turandot family.

It localises to the secreted. In terms of biological role, a humoral factor that may play a role in stress tolerance. This chain is Protein Turandot X, found in Drosophila melanogaster (Fruit fly).